The primary structure comprises 420 residues: Reticulon-4 receptor-like 2 (420 aa).

The first 30 residues, 1-30 (MLPGLRRLLQGPASACLLLTLLALPSVTPS), serve as a signal peptide directing secretion. 2 disulfides stabilise this stretch: cysteine 31-cysteine 37 and cysteine 35-cysteine 46. Residues 31 to 60 (CPMLCTCYSSPPTVSCQANNFSSVPLSLPP) form the LRRNT domain. The N-linked (GlcNAc...) asparagine glycan is linked to asparagine 50. 8 LRR repeats span residues 61-82 (STQR…TFGP), 83-104 (NLLT…TFRH), 107-129 (ALEE…TFQG), 132-153 (RLQS…IFRG), 156-177 (SLQY…LFAD), 180-201 (NLSH…VFRG), 204-225 (SLDR…AFHG), and 228-249 (RLTI…ALAD). Asparagine 93 carries an N-linked (GlcNAc...) asparagine glycan. An N-linked (GlcNAc...) asparagine glycan is attached at asparagine 236. One can recognise an LRRCT domain in the interval 261–312 (NPWACDCRARPLWAWFQRARVSSSDVTCATPPERQGRDLRALRDSDFQACPP). 2 cysteine pairs are disulfide-bonded: cysteine 265/cysteine 288 and cysteine 267/cysteine 310. Residues 286-399 (VTCATPPERQ…CQAPADSRGP (114 aa)) form a disordered region. Basic and acidic residues predominate over residues 294-306 (RQGRDLRALRDSD). The segment at 315–327 (PTRPGSRARGNSS) is important for interaction with MAG. The segment covering 351–360 (LPAEDSRGRQ) has biased composition (basic and acidic residues). Residue glycine 398 is the site of GPI-anchor amidated glycine attachment. Positions 399–420 (PALSAGLRTPLLCLLPLALHHL) are cleaved as a propeptide — removed in mature form.

The protein belongs to the Nogo receptor family. Interaction with MAG is controversial, and may be indirect. Interacts with MAG. Does not interact with OMG and RTN4. Undergoes zinc metalloproteinase-mediated ectodomain shedding in neuroblastoma cells; is released both as a full-length ectodomain and an N-terminal fragment containing the leucine-rich repeat (LRR) region of the protein. Post-translationally, N-glycosylated. Detected in brain. Detected in hippocampus neurons (at protein level).

The protein resides in the cell membrane. It localises to the membrane raft. Its subcellular location is the cell projection. The protein localises to the dendrite. It is found in the axon. The protein resides in the perikaryon. Cell surface receptor that plays a functionally redundant role in the inhibition of neurite outgrowth mediated by MAG. Plays a functionally redundant role in postnatal brain development. Contributes to normal axon migration across the brain midline and normal formation of the corpus callosum. Does not seem to play a significant role in regulating axon regeneration in the adult central nervous system. Protects motoneurons against apoptosis; protection against apoptosis is probably mediated by MAG. Like other family members, plays a role in restricting the number dendritic spines and the number of synapses that are formed during brain development. Signaling mediates activation of Rho and downstream reorganization of the actin cytoskeleton. In Mus musculus (Mouse), this protein is Reticulon-4 receptor-like 2.